The primary structure comprises 200 residues: Small ribosomal subunit protein uS4 (200 aa).

An S4 RNA-binding domain is found at 92–155; the sequence is SRLDAVVYSL…QKLNIIVESV (64 aa).

Belongs to the universal ribosomal protein uS4 family. As to quaternary structure, part of the 30S ribosomal subunit. Contacts protein S5. The interaction surface between S4 and S5 is involved in control of translational fidelity.

One of the primary rRNA binding proteins, it binds directly to 16S rRNA where it nucleates assembly of the body of the 30S subunit. Its function is as follows. With S5 and S12 plays an important role in translational accuracy. The chain is Small ribosomal subunit protein uS4 from Staphylococcus aureus (strain JH9).